Here is a 244-residue protein sequence, read N- to C-terminus: 15,16-dihydrobiliverdin:ferredoxin oxidoreductase (244 aa).

The protein belongs to the HY2 family.

It catalyses the reaction 15,16-dihydrobiliverdin + oxidized 2[4Fe-4S]-[ferredoxin] = biliverdin IXalpha + reduced 2[4Fe-4S]-[ferredoxin] + 2 H(+). Its function is as follows. Catalyzes the two-electron reduction of biliverdin IX-alpha at the C15 methine bridge. The chain is 15,16-dihydrobiliverdin:ferredoxin oxidoreductase (pebA) from Gloeobacter violaceus (strain ATCC 29082 / PCC 7421).